A 312-amino-acid chain; its full sequence is Acetyl-coenzyme A carboxylase carboxyl transferase subunit alpha (312 aa).

In terms of domain architecture, CoA carboxyltransferase C-terminal spans 36–286; sequence RLDKEVKSIY…KEYFLDALRT (251 aa).

This sequence belongs to the AccA family. Acetyl-CoA carboxylase is a heterohexamer composed of biotin carboxyl carrier protein (AccB), biotin carboxylase (AccC) and two subunits each of ACCase subunit alpha (AccA) and ACCase subunit beta (AccD).

It is found in the cytoplasm. The enzyme catalyses N(6)-carboxybiotinyl-L-lysyl-[protein] + acetyl-CoA = N(6)-biotinyl-L-lysyl-[protein] + malonyl-CoA. The protein operates within lipid metabolism; malonyl-CoA biosynthesis; malonyl-CoA from acetyl-CoA: step 1/1. In terms of biological role, component of the acetyl coenzyme A carboxylase (ACC) complex. First, biotin carboxylase catalyzes the carboxylation of biotin on its carrier protein (BCCP) and then the CO(2) group is transferred by the carboxyltransferase to acetyl-CoA to form malonyl-CoA. The protein is Acetyl-coenzyme A carboxylase carboxyl transferase subunit alpha of Helicobacter pylori (strain HPAG1).